We begin with the raw amino-acid sequence, 327 residues long: Putative HTH-type transcriptional regulatory protein MM_0444 (327 aa).

Positions 132–190 (LKKARTTQSMSLGTLASMVGVSRRTISKYEEEGMDASIDVVLHLEDIFGVELAKPIDIL) constitute an HTH cro/C1-type domain. The segment at residues 143–162 (LGTLASMVGVSRRTISKYEE) is a DNA-binding region (H-T-H motif). The tract at residues 195-214 (SRKPRKKAEPEKEEPKGKPG) is disordered. The segment covering 201–211 (KAEPEKEEPKG) has biased composition (basic and acidic residues).

The chain is Putative HTH-type transcriptional regulatory protein MM_0444 from Methanosarcina mazei (strain ATCC BAA-159 / DSM 3647 / Goe1 / Go1 / JCM 11833 / OCM 88) (Methanosarcina frisia).